Here is a 234-residue protein sequence, read N- to C-terminus: Ribose-5-phosphate isomerase A (234 aa).

Residues 34–37, 90–93, and 103–106 each bind substrate; these read TGST, DGAD, and KGGG. The active-site Proton acceptor is the E112. K130 provides a ligand contact to substrate.

Belongs to the ribose 5-phosphate isomerase family. Homodimer.

It carries out the reaction aldehydo-D-ribose 5-phosphate = D-ribulose 5-phosphate. Its pathway is carbohydrate degradation; pentose phosphate pathway; D-ribose 5-phosphate from D-ribulose 5-phosphate (non-oxidative stage): step 1/1. Its function is as follows. Catalyzes the reversible conversion of ribose-5-phosphate to ribulose 5-phosphate. In Methanosarcina acetivorans (strain ATCC 35395 / DSM 2834 / JCM 12185 / C2A), this protein is Ribose-5-phosphate isomerase A.